We begin with the raw amino-acid sequence, 1736 residues long: Hybrid signal transduction histidine kinase I (1736 aa).

Residues 143–161 are compositionally biased toward low complexity; sequence HNINNNQNNQNSVNINSSN. The interval 143–171 is disordered; it reads HNINNNQNNQNSVNINSSNKGQYNRPEPS. Positions 234–286 constitute a PAC domain; sequence FEYPLRINRKNDNLVRYIQLKGEIIKKDDKVFKVLGVCHDFSEIQEAKDKLEE. The region spanning 287–358 is the PAS domain; the sequence is ESKFVEALIG…QINLEKSGTP (72 aa). Positions 378–469 are disordered; the sequence is TSNQQQSSLS…NTTNGIGGAT (92 aa). Over residues 379–389 the composition is skewed to low complexity; that stretch reads SNQQQSSLSKS. Residues 392–412 are compositionally biased toward polar residues; the sequence is PRSQSNCSNGNKSQNRLSKNY. The segment covering 413–469 has biased composition (low complexity); that stretch reads STTTTTTNNNNNNNNNNNNNNNNNNNNNSISQQQQTQVSTQQTQQQQNTTNGIGGAT. Positions 556 to 908 constitute a Histidine kinase domain; the sequence is NISHELLSPM…TFHFILSIKS (353 aa). At His559 the chain carries Phosphohistidine; by autocatalysis. 7 disordered regions span residues 711-821, 952-971, 1080-1124, 1157-1258, 1277-1301, 1330-1393, and 1419-1520; these read NSKT…KREK, TKKVKKDSNDNGNNDSTNYG, NGNN…KQHS, PPKS…ILSP, SLTPNSSNSTSTNVTQSSSNIINNG, ASSP…NLSS, and SNNL…PPIL. 2 stretches are compositionally biased toward acidic residues: residues 725 to 735 and 758 to 789; these read SIDGDYDDQDN and ELDEKDNSDDDDENDDENDETDENDDDTDDDT. Low complexity-rich tracts occupy residues 790-807, 961-971, and 1080-1096; these read SSNTSRNNISNNLLFHNN, DNGNNDSTNYG, and NGNNNSGISLNNSNNNI. Positions 1097 to 1117 are enriched in polar residues; the sequence is QTPNGLNNSRGSSLISTPSTK. 2 stretches are compositionally biased toward low complexity: residues 1186–1195 and 1202–1258; these read SSPPINSSSS and TNGS…ILSP. Polar residues predominate over residues 1330–1339; the sequence is ASSPKQSQRG. 4 stretches are compositionally biased toward low complexity: residues 1340 to 1376, 1425 to 1475, 1482 to 1492, and 1506 to 1520; these read YSPKQQYSPKQYSPKQQYSPKQYSPKQQQQQQQQQQQ, NNNN…STPE, SPRSNNNNNCS, and SSTITTPQFQSPPIL. The 124-residue stretch at 1551–1674 folds into the Response regulatory domain; that stretch reads KVLVAEDNTM…LLYEVINTQI (124 aa). Asp1605 carries the post-translational modification 4-aspartylphosphate. The span at 1695–1722 shows a compositional bias: low complexity; sequence NNNNNNTNNNNNNNNSSNPVNNNNSNSI. Residues 1695 to 1736 are disordered; that stretch reads NNNNNNTNNNNNNNNSSNPVNNNNSNSIDATQQELNNEKIRI.

Post-translationally, activation probably requires transfer of a phosphate group between a histidine in the kinase core (transmitter) domain and an aspartate of the receiver domain.

It catalyses the reaction ATP + protein L-histidine = ADP + protein N-phospho-L-histidine.. In terms of biological role, acts as a receptor histidine kinase for a signal transduction pathway. This protein undergoes an ATP-dependent autophosphorylation at a conserved histidine residue in the kinase core, and a phosphoryl group is then transferred to a conserved aspartate residue in the receiver domain. The protein is Hybrid signal transduction histidine kinase I (dhkI-1) of Dictyostelium discoideum (Social amoeba).